Reading from the N-terminus, the 88-residue chain is Small ribosomal subunit protein uS15 (88 aa).

The protein belongs to the universal ribosomal protein uS15 family. In terms of assembly, part of the 30S ribosomal subunit. Forms a bridge to the 50S subunit in the 70S ribosome, contacting the 23S rRNA.

One of the primary rRNA binding proteins, it binds directly to 16S rRNA where it helps nucleate assembly of the platform of the 30S subunit by binding and bridging several RNA helices of the 16S rRNA. Functionally, forms an intersubunit bridge (bridge B4) with the 23S rRNA of the 50S subunit in the ribosome. This chain is Small ribosomal subunit protein uS15, found in Trichlorobacter lovleyi (strain ATCC BAA-1151 / DSM 17278 / SZ) (Geobacter lovleyi).